Consider the following 416-residue polypeptide: Lipid phosphate phosphatase delta (416 aa).

The next 2 membrane-spanning stretches (helical) occupy residues 72-92 (FFSGLSCVVSVPFYTAFLPLL) and 104-124 (MTLLIAFCDYLGNCIKDVVSA). The phosphatase sequence motif I stretch occupies residues 119–127 (KDVVSAPRP). The phosphatase sequence motif II stretch occupies residues 151–154 (PSSH). The active-site Proton donor is the histidine 154. The chain crosses the membrane as a helical span at residues 178-198 (VSIQYYGFALACLLVALIAFG). Residues 198 to 209 (GRVYLGMHSVVD) are phosphatase sequence motif III. The Nucleophile role is filled by histidine 205. 5 consecutive transmembrane segments (helical) span residues 207 to 227 (VVDIVSGLAIGVLILGLWLTV), 241 to 261 (VSSFWTALSFLLLFAYPTPEH), 266 to 286 (YEYHTAFNGVTLGIVTGVQQT), 302 to 322 (ELPISSYLGRVMVGIPTILLV), and 393 to 413 (FFQYAGLAWSVVDLVPSLFSY).

Belongs to the type 2 lipid phosphate phosphatase family.

The protein localises to the endoplasmic reticulum membrane. Its function is as follows. Functions as a sphingoid long-chain base phosphate (LCBP) phosphatase. May play a role in the regulation of LCBP levels and be involved in stomatal responses through LCBP-mediated ABA signaling. This Arabidopsis thaliana (Mouse-ear cress) protein is Lipid phosphate phosphatase delta (LPPD).